We begin with the raw amino-acid sequence, 310 residues long: Probable manganese-dependent inorganic pyrophosphatase (310 aa).

Residues H10, D14, D16, D75, H97, and D149 each coordinate Mn(2+).

Belongs to the PPase class C family. Mn(2+) serves as cofactor.

The protein resides in the cytoplasm. The enzyme catalyses diphosphate + H2O = 2 phosphate + H(+). The sequence is that of Probable manganese-dependent inorganic pyrophosphatase from Clostridium acetobutylicum (strain ATCC 824 / DSM 792 / JCM 1419 / IAM 19013 / LMG 5710 / NBRC 13948 / NRRL B-527 / VKM B-1787 / 2291 / W).